Here is a 416-residue protein sequence, read N- to C-terminus: Orexin/Hypocretin receptor type 1 (416 aa).

The interval 1-22 is disordered; the sequence is MEPSATPGAQPGVPTSSGEPFH. Over 1–46 the chain is Extracellular; sequence MEPSATPGAQPGVPTSSGEPFHLPPDYEDEFLRYLWRDYLYPKQYE. Positions 26–41 are required for response to orexin-A; the sequence is DYEDEFLRYLWRDYLY. A helical transmembrane segment spans residues 47–67; that stretch reads WVLIAAYVAVFLIALVGNTLV. Residues 68–82 are Cytoplasmic-facing; sequence CLAVWRNHHMRTVTN. A helical transmembrane segment spans residues 83 to 105; the sequence is YFIVNLSLADVLVTAICLPASLL. Residues 106–119 are Extracellular-facing; that stretch reads VDITESWLFGHALC. Cysteine 119 and cysteine 202 are joined by a disulfide. A helical membrane pass occupies residues 120–140; that stretch reads KVIPYLQAVSVSVAVLTLSFI. Residues 141-160 lie on the Cytoplasmic side of the membrane; that stretch reads ALDRWYAICHPLLFKSTARR. A helical transmembrane segment spans residues 161 to 182; it reads ARGSILGIWAVSLAVMVPQAAV. At 183 to 213 the chain is on the extracellular side; it reads MECSSVLPELANRTRLFSVCDERWADELYPK. Asparagine 194 carries an N-linked (GlcNAc...) asparagine glycan. Residues 214–235 traverse the membrane as a helical segment; it reads IYHSCFFFVTYLAPLGLMGMAY. Topologically, residues 236–298 are cytoplasmic; it reads FQIFRKLWGP…QMRARRKTAK (63 aa). The helical transmembrane segment at 299-321 threads the bilayer; that stretch reads MLMVVLLVFALCYLPISVLNVLK. The Extracellular segment spans residues 322–336; that stretch reads RVFGMFRQASDREAV. Residues 337 to 360 traverse the membrane as a helical segment; sequence YACFTFSHWLVYANSAANPIIYNF. Topologically, residues 361–416 are cytoplasmic; it reads LSGKFREQFKAAFSCCLPGLGPSSSARHKSLSLQSRCSVSKVSEHVVLTTVTTVLS.

This sequence belongs to the G-protein coupled receptor 1 family. As to expression, highly expressed in the brain in the prefrontal cortex, hippocampus, paraventricular thalamus, ventromedial hypothalamus, arcuate nucleus, dorsal raphe nucleus, and locus coeruleus. Not detected in the spleen, lung, liver, skeletal muscle, kidney and testis. Orexin receptor mRNA expression has also been reported in the adrenal gland, enteric nervous system, and pancreas.

It is found in the cell membrane. Functionally, moderately selective excitatory receptor for orexin-A and, with a lower affinity, for orexin-B neuropeptide. Triggers an increase in cytoplasmic Ca(2+) levels in response to orexin-A binding. In Rattus norvegicus (Rat), this protein is Orexin/Hypocretin receptor type 1.